The chain runs to 147 residues: Small ribosomal subunit protein eS19 (147 aa).

This sequence belongs to the eukaryotic ribosomal protein eS19 family. As to quaternary structure, part of the 30S ribosomal subunit.

In terms of biological role, may be involved in maturation of the 30S ribosomal subunit. The sequence is that of Small ribosomal subunit protein eS19 from Archaeoglobus fulgidus (strain ATCC 49558 / DSM 4304 / JCM 9628 / NBRC 100126 / VC-16).